Here is a 405-residue protein sequence, read N- to C-terminus: Type III polyketide synthase 10 (405 aa).

The segment covering 1-18 has biased composition (polar residues); the sequence is MVSTNAGGIASKQASSMA. Positions 1–20 are disordered; sequence MVSTNAGGIASKQASSMAPN. Catalysis depends on Cys-170, which acts as the Nucleophile.

It belongs to the thiolase-like superfamily. Chalcone/stilbene synthases family. In terms of assembly, interacts with STS1. In terms of tissue distribution, expressed in adult flowers.

Its subcellular location is the endoplasmic reticulum. Its function is as follows. Plant type III polyketide synthases (PKSs) that catalyzes the condensation of fatty acyl-CoA with malonyl-CoA to generate triketide and tetraketide alpha-pyrones, the main components of pollen exine and potential sporopollenin precursors. May be involved in the synthesis of sporopollenin precursors in tapetal cells to regulate pollen wall formation. Required for exine and Ubisch body formation in anthers. Does not possess chalcone synthase (CHS) activity in vitro with the substrates 4-coumaroyl-CoA and malonyl-CoA. The protein is Type III polyketide synthase 10 of Oryza sativa subsp. japonica (Rice).